The chain runs to 494 residues: Cytochrome P450 2B11 (494 aa).

Ser128 is modified (phosphoserine; by PKA). Cys436 serves as a coordination point for heme.

This sequence belongs to the cytochrome P450 family. Requires heme as cofactor.

The protein localises to the endoplasmic reticulum membrane. Its subcellular location is the microsome membrane. The enzyme catalyses an organic molecule + reduced [NADPH--hemoprotein reductase] + O2 = an alcohol + oxidized [NADPH--hemoprotein reductase] + H2O + H(+). In terms of biological role, cytochromes P450 are a group of heme-thiolate monooxygenases. In liver microsomes, this enzyme is involved in an NADPH-dependent electron transport pathway. This isozyme seems responsible for metabolism of 2,2',4,4',5,5'-hexachlorobiphenyl. The polypeptide is Cytochrome P450 2B11 (CYP2B11) (Canis lupus familiaris (Dog)).